A 259-amino-acid chain; its full sequence is Isoprenyl transferase (259 aa).

Asp-30 is an active-site residue. Residue Asp-30 coordinates Mg(2+). Residues 31–34 (GNGR), Trp-35, Arg-43, His-47, and 75–77 (STE) each bind substrate. Asn-78 serves as the catalytic Proton acceptor. Substrate contacts are provided by residues Trp-79, Arg-81, Arg-198, and 204–206 (RIS). Residue Glu-217 participates in Mg(2+) binding.

The protein belongs to the UPP synthase family. In terms of assembly, homodimer. Mg(2+) is required as a cofactor.

In terms of biological role, catalyzes the condensation of isopentenyl diphosphate (IPP) with allylic pyrophosphates generating different type of terpenoids. This is Isoprenyl transferase from Caulobacter vibrioides (strain ATCC 19089 / CIP 103742 / CB 15) (Caulobacter crescentus).